Reading from the N-terminus, the 351-residue chain is uncharacterized protein (351 aa).

It belongs to the bacterial luciferase oxidoreductase family.

This is an uncharacterized protein from Sinorhizobium fredii (strain NBRC 101917 / NGR234).